The chain runs to 917 residues: Translation initiation factor IF-2 (917 aa).

Residues 1–312 form a disordered region; that stretch reads MEEQKSIKET…KGGREENENT (312 aa). The span at 20–30 shows a compositional bias: basic residues; sequence TKKKLVIKKKA. Residues 41–59 show a composition bias toward polar residues; it reads PGAQGQTTATEAKQSSPAS. 2 stretches are compositionally biased toward basic and acidic residues: residues 60 to 76 and 95 to 118; these read SDKK…EAKR and RPDR…RKPE. Composition is skewed to gly residues over residues 132 to 141, 167 to 256, and 281 to 293; these read SGGGQGGGNQ, QTGG…GYQG, and APGG…GPGG. Over residues 297-312 the composition is skewed to basic and acidic residues; the sequence is RVFDKEKGGREENENT. The region spanning 414–587 is the tr-type G domain; that stretch reads TRPPVVTIMG…ELLDHKANPK (174 aa). The segment at 423 to 430 is G1; the sequence is GHVDHGKT. Residue 423-430 coordinates GTP; sequence GHVDHGKT. Residues 448-452 are G2; that stretch reads GITQH. Residues 469-472 form a G3 region; sequence DTPG. GTP is bound by residues 469-473 and 523-526; these read DTPGH and NKID. Residues 523 to 526 are G4; it reads NKID. The interval 559–561 is G5; it reads SAK.

This sequence belongs to the TRAFAC class translation factor GTPase superfamily. Classic translation factor GTPase family. IF-2 subfamily.

Its subcellular location is the cytoplasm. Functionally, one of the essential components for the initiation of protein synthesis. Protects formylmethionyl-tRNA from spontaneous hydrolysis and promotes its binding to the 30S ribosomal subunits. Also involved in the hydrolysis of GTP during the formation of the 70S ribosomal complex. The polypeptide is Translation initiation factor IF-2 (Leptospira biflexa serovar Patoc (strain Patoc 1 / ATCC 23582 / Paris)).